We begin with the raw amino-acid sequence, 333 residues long: Biotin synthase (333 aa).

The 228-residue stretch at 51–278 (RAIQLSTLMS…KSYVRLSAGR (228 aa)) folds into the Radical SAM core domain. Residues Cys-66, Cys-70, and Cys-73 each coordinate [4Fe-4S] cluster. Residues Cys-110, Cys-141, Cys-201, and Arg-273 each coordinate [2Fe-2S] cluster.

The protein belongs to the radical SAM superfamily. Biotin synthase family. Homodimer. It depends on [4Fe-4S] cluster as a cofactor. [2Fe-2S] cluster serves as cofactor.

The enzyme catalyses (4R,5S)-dethiobiotin + (sulfur carrier)-SH + 2 reduced [2Fe-2S]-[ferredoxin] + 2 S-adenosyl-L-methionine = (sulfur carrier)-H + biotin + 2 5'-deoxyadenosine + 2 L-methionine + 2 oxidized [2Fe-2S]-[ferredoxin]. The protein operates within cofactor biosynthesis; biotin biosynthesis; biotin from 7,8-diaminononanoate: step 2/2. Functionally, catalyzes the conversion of dethiobiotin (DTB) to biotin by the insertion of a sulfur atom into dethiobiotin via a radical-based mechanism. The protein is Biotin synthase of Haemophilus influenzae (strain 86-028NP).